Reading from the N-terminus, the 101-residue chain is Aspartyl/glutamyl-tRNA(Asn/Gln) amidotransferase subunit C (101 aa).

The protein belongs to the GatC family. Heterotrimer of A, B and C subunits.

The catalysed reaction is L-glutamyl-tRNA(Gln) + L-glutamine + ATP + H2O = L-glutaminyl-tRNA(Gln) + L-glutamate + ADP + phosphate + H(+). It catalyses the reaction L-aspartyl-tRNA(Asn) + L-glutamine + ATP + H2O = L-asparaginyl-tRNA(Asn) + L-glutamate + ADP + phosphate + 2 H(+). Functionally, allows the formation of correctly charged Asn-tRNA(Asn) or Gln-tRNA(Gln) through the transamidation of misacylated Asp-tRNA(Asn) or Glu-tRNA(Gln) in organisms which lack either or both of asparaginyl-tRNA or glutaminyl-tRNA synthetases. The reaction takes place in the presence of glutamine and ATP through an activated phospho-Asp-tRNA(Asn) or phospho-Glu-tRNA(Gln). This Enterococcus faecalis (strain ATCC 700802 / V583) protein is Aspartyl/glutamyl-tRNA(Asn/Gln) amidotransferase subunit C.